The primary structure comprises 294 residues: Transcription repressor OFP14 (294 aa).

Residues Ser49 to Arg60 show a composition bias toward basic residues. Disordered stretches follow at residues Ser49–Ser72, Asp96–Asp129, and Ala141–Thr185. Basic and acidic residues-rich tracts occupy residues Phe61–Ser72 and Asp96–Ser117. Positions Ser118–Asp128 are enriched in acidic residues. Positions Ser164 to Thr185 are enriched in low complexity. The 65-residue stretch at Val195–Ala259 folds into the OVATE domain.

Interacts with KNAT2 and KNAT3. As to expression, expressed in roots, rosette and cauline leaves, shoots, stems, flower buds and siliques.

The protein localises to the nucleus. Functionally, transcriptional repressor that may regulate multiple aspects of plant growth and development through the regulation of BEL1-LIKE (BLH) and KNOX TALE (KNAT) homeodomain transcription factors. This Arabidopsis thaliana (Mouse-ear cress) protein is Transcription repressor OFP14 (OFP14).